A 194-amino-acid chain; its full sequence is uncharacterized protein (194 aa).

Disordered regions lie at residues 52 to 71 and 86 to 194; these read KGRT…EKYK and AEAL…DGGS. 3 stretches are compositionally biased toward polar residues: residues 53–63, 98–111, and 119–132; these read GRTTQSAINSE, ALTS…SSTN, and IAHS…TSPA. Residues 133–169 are compositionally biased toward basic residues; that stretch reads NRHRRKEKERTRSNHRHGSHRRHEPYRTHLSRHHRHS. The span at 175–194 shows a compositional bias: basic and acidic residues; sequence SKRDDRYERRREHSPNDGGS.

This is an uncharacterized protein from Schizosaccharomyces pombe (strain 972 / ATCC 24843) (Fission yeast).